Reading from the N-terminus, the 339-residue chain is 2-deoxy-scyllo-inosamine dehydrogenase (339 aa).

Positions 37, 59, 88, 91, 94, 102, and 143 each coordinate Zn(2+).

It belongs to the zinc-containing alcohol dehydrogenase family. DOIA dehydrogenase subfamily. Requires Zn(2+) as cofactor.

It catalyses the reaction 2-deoxy-scyllo-inosamine + NADP(+) = 3-amino-2,3-dideoxy-scyllo-inosose + NADPH + H(+). The catalysed reaction is 2-deoxy-scyllo-inosamine + NAD(+) = 3-amino-2,3-dideoxy-scyllo-inosose + NADH + H(+). Its pathway is metabolic intermediate biosynthesis; 2-deoxystreptamine biosynthesis; 2-deoxystreptamine from D-glucose 6-phosphate: step 3/4. The protein operates within antibiotic biosynthesis; paromomycin biosynthesis. Its function is as follows. Catalyzes the oxidation of 2-deoxy-scyllo-inosamine (DOIA) with NAD(+) or NADP(+), forming 3-amino-2,3-dideoxy-scyllo-inosose (amino-DOI). This is 2-deoxy-scyllo-inosamine dehydrogenase (parE) from Streptomyces paromomycinus (Streptomyces rimosus subsp. paromomycinus).